The primary structure comprises 557 residues: UvrABC system protein C (557 aa).

In terms of domain architecture, GIY-YIG spans 14–89; the sequence is EEPGVYIFKN…IKKYRPKYNV (76 aa). In terms of domain architecture, UVR spans 194–229; that stretch reads EEVFDYLKEKMETHSKMLDFENAAKYRDLLLNLSNV.

The protein belongs to the UvrC family. As to quaternary structure, interacts with UvrB in an incision complex.

Its subcellular location is the cytoplasm. The UvrABC repair system catalyzes the recognition and processing of DNA lesions. UvrC both incises the 5' and 3' sides of the lesion. The N-terminal half is responsible for the 3' incision and the C-terminal half is responsible for the 5' incision. The sequence is that of UvrABC system protein C from Thermotoga maritima (strain ATCC 43589 / DSM 3109 / JCM 10099 / NBRC 100826 / MSB8).